The chain runs to 184 residues: Probable DNA-directed RNA polymerase subunit delta (184 aa).

One can recognise an HTH HARE-type domain in the interval 14–81; sequence LSMIEVARAI…GENVWALRSW (68 aa). 2 disordered regions span residues 88–107 and 118–184; these read DEEV…KHHK and GDDD…DEDD. The segment covering 118–164 has biased composition (acidic residues); the sequence is GDDDIIDYDNDDPEDDDLDAATDDSDDDYSDDDSDYDEDNDDADDVL.

This sequence belongs to the RpoE family. As to quaternary structure, RNAP is composed of a core of 2 alpha, a beta and a beta' subunits. The core is associated with a delta subunit and one of several sigma factors.

Functionally, participates in both the initiation and recycling phases of transcription. In the presence of the delta subunit, RNAP displays an increased specificity of transcription, a decreased affinity for nucleic acids, and an increased efficiency of RNA synthesis because of enhanced recycling. The polypeptide is Probable DNA-directed RNA polymerase subunit delta (Lactobacillus acidophilus (strain ATCC 700396 / NCK56 / N2 / NCFM)).